A 114-amino-acid chain; its full sequence is FK506-binding protein 1 (114 aa).

Positions Gly26–Asn114 constitute a PPIase FKBP-type domain.

The protein belongs to the FKBP-type PPIase family. FKBP1 subfamily.

It is found in the cytoplasm. It catalyses the reaction [protein]-peptidylproline (omega=180) = [protein]-peptidylproline (omega=0). With respect to regulation, inhibited by both FK506 and rapamycin. PPIases accelerate the folding of proteins. It catalyzes the cis-trans isomerization of proline imidic peptide bonds in oligopeptides. This chain is FK506-binding protein 1 (FPR1), found in Kluyveromyces lactis (strain ATCC 8585 / CBS 2359 / DSM 70799 / NBRC 1267 / NRRL Y-1140 / WM37) (Yeast).